A 207-amino-acid polypeptide reads, in one-letter code: Ribonuclease HII (207 aa).

The RNase H type-2 domain occupies 12–205; sequence GLVVGIDEVG…IRNMIEAEAH (194 aa). Residues Asp18, Glu19, and Asp114 each contribute to the a divalent metal cation site.

This sequence belongs to the RNase HII family. The cofactor is Mn(2+). Mg(2+) is required as a cofactor.

The protein localises to the cytoplasm. It carries out the reaction Endonucleolytic cleavage to 5'-phosphomonoester.. Its function is as follows. Endonuclease that specifically degrades the RNA of RNA-DNA hybrids. In Gluconobacter oxydans (strain 621H) (Gluconobacter suboxydans), this protein is Ribonuclease HII.